Here is a 328-residue protein sequence, read N- to C-terminus: Ankyrin repeat domain-containing protein 2 (328 aa).

Residue Ser-36 is modified to Phosphoserine. A Phosphoserine; by PKB/AKT2 modification is found at Ser-68. The segment at 96-116 (RDALAAAQEPPPEPEEITGPV) is disordered. ANK repeat units lie at residues 116–145 (VNEE…SADT), 149–178 (FRRT…TVDF), 182–211 (LDCT…DTNV), 215–244 (LLST…DINA), and 248–277 (EGDS…DMMA). Positions 297–328 (RHALEHPEPESEQNGLERPGSGRETPQPIPAQ) are disordered.

In terms of assembly, interacts with ID3; both proteins cooperate in myoblast differentiation. Interacts with TTN/titin. Interacts (via ANK repeats) with TCAP; the interaction is direct. Interacts with TJP1 (via PDZ domains). Interacts with PML; the interaction is direct. Interacts with p53/TP53. Interacts with YBX1. Interacts with AKT2. In terms of processing, phosphorylation at Ser-68 by PKB/AKT2 in response to oxidative stress induces translocation to the nucleus and negatively regulates myoblast differentiation. In terms of tissue distribution, expressed by myoblasts (at protein level). Expressed in skeletal and cardiac muscles.

Its subcellular location is the cytoplasm. The protein resides in the myofibril. The protein localises to the sarcomere. It is found in the i band. It localises to the cytosol. Its subcellular location is the nucleus. The protein resides in the PML body. Functions as a negative regulator of myocyte differentiation. May interact with both sarcoplasmic structural proteins and nuclear proteins to regulate gene expression during muscle development and in response to muscle stress. This is Ankyrin repeat domain-containing protein 2 (Ankrd2) from Mus musculus (Mouse).